The following is a 720-amino-acid chain: Cyclic nucleotide-gated ion channel 17 (720 aa).

Topologically, residues 1 to 85 are cytoplasmic; that stretch reads MELRKDKLLM…SEIVLKWNWV (85 aa). Residues 86–106 traverse the membrane as a helical segment; sequence FIVSCMVALFIDPLYFFVPAI. At 107–121 the chain is on the extracellular side; sequence GGDKNYPCARTDTSL. A helical transmembrane segment spans residues 122-142; the sequence is SILVTFFRTIADLFYLLHIFI. The Cytoplasmic portion of the chain corresponds to 143-178; that stretch reads KFRTGFIAPNSSTRVFGRGELVMDPKAIAWRYIKSD. A helical transmembrane segment spans residues 179–199; that stretch reads FIIDLIATLPLPQIVIWFVIS. Residues 200-211 lie on the Extracellular side of the membrane; the sequence is TTKSYRFDHNNN. The chain crosses the membrane as a helical span at residues 212–232; the sequence is AIALIVLLQYIPRFYLIIPLS. The Cytoplasmic segment spans residues 233-252; that stretch reads SQIVKATGVVTKTAWAGAAY. Residues 253 to 273 traverse the membrane as a helical segment; that stretch reads NLLLYMLASHVLGAAWYILSV. At 274-377 the chain is on the extracellular side; that stretch reads DRYTSCWKSR…LSTTMFMGET (104 aa). A helical membrane pass occupies residues 378-398; it reads TFAVLIAIFGLVLFAHLIGNM. Residues 399–720 are Cytoplasmic-facing; it reads QTYLQSLTVR…EPDFSAEHDD (322 aa). Residues 481-605 and E552 each bind a nucleoside 3',5'-cyclic phosphate; that span reads FFSQ…SKKL. Positions 597–612 are calmodulin-binding; sequence FRRLHSKKLQHTFRFY. One can recognise an IQ domain in the interval 617–646; it reads RTWAACFIQAAWRRYKRRVMENNLTAIESM.

Belongs to the cyclic nucleotide-gated cation channel (TC 1.A.1.5) family. As to quaternary structure, homotetramer or heterotetramer. Part of a functional complex containing PSKR1, BAK1, CNGC17, and AHA. Interacts with AHA1, AHA2, and BAK1, but not with PSKR1 or BRI1.

The protein localises to the cell membrane. Its function is as follows. Probable cyclic nucleotide-gated ion channel. Forms a functional cation-translocating unit with AHAs that is activated by PSKR1/BAK1 and possibly other BAK1/RLK complexes. Required for PSK-induced protoplast expansion. The sequence is that of Cyclic nucleotide-gated ion channel 17 from Arabidopsis thaliana (Mouse-ear cress).